The following is a 121-amino-acid chain: uncharacterized protein (121 aa).

77–84 provides a ligand contact to ATP; the sequence is AALSFGKT.

This is an uncharacterized protein from Saccharomyces cerevisiae (strain ATCC 204508 / S288c) (Baker's yeast).